The primary structure comprises 241 residues: Acyl-protein thioesterase 1 (241 aa).

Residues serine 122, aspartate 178, and histidine 211 each act as charge relay system in the active site.

The protein belongs to the AB hydrolase superfamily. AB hydrolase 2 family.

Its subcellular location is the cytoplasm. It localises to the nucleus. It carries out the reaction S-hexadecanoyl-L-cysteinyl-[protein] + H2O = L-cysteinyl-[protein] + hexadecanoate + H(+). In terms of biological role, hydrolyzes fatty acids from S-acylated cysteine residues in proteins with a strong preference for palmitoylated G-alpha proteins over other acyl substrates. Mediates the deacylation of G-alpha proteins such as GPA1 in vivo, but has weak or no activity toward palmitoylated Ras proteins. Has weak lysophospholipase activity in vitro; however such activity may not exist in vivo. The protein is Acyl-protein thioesterase 1 of Aspergillus fumigatus (strain ATCC MYA-4609 / CBS 101355 / FGSC A1100 / Af293) (Neosartorya fumigata).